The sequence spans 263 residues: Hydroxyethylthiazole kinase 1 (263 aa).

Met42 provides a ligand contact to substrate. Positions 118 and 164 each coordinate ATP. Gly191 lines the substrate pocket.

Belongs to the Thz kinase family. Mg(2+) is required as a cofactor.

The enzyme catalyses 5-(2-hydroxyethyl)-4-methylthiazole + ATP = 4-methyl-5-(2-phosphooxyethyl)-thiazole + ADP + H(+). Its pathway is cofactor biosynthesis; thiamine diphosphate biosynthesis; 4-methyl-5-(2-phosphoethyl)-thiazole from 5-(2-hydroxyethyl)-4-methylthiazole: step 1/1. In terms of biological role, catalyzes the phosphorylation of the hydroxyl group of 4-methyl-5-beta-hydroxyethylthiazole (THZ). The protein is Hydroxyethylthiazole kinase 1 of Clostridium botulinum (strain Okra / Type B1).